A 384-amino-acid polypeptide reads, in one-letter code: Carbamoyl phosphate synthase small chain (384 aa).

The CPSase stretch occupies residues 1–192; that stretch reads MPIAAAKPAL…FGPVAEQQGQ (192 aa). Positions 51, 244, and 246 each coordinate L-glutamine. Residues 196-381 form the Glutamine amidotransferase type-1 domain; that stretch reads TVVALDFGVK…VKLMRQQKAE (186 aa). Cysteine 272 serves as the catalytic Nucleophile. L-glutamine-binding residues include methionine 273, glutamine 276, asparagine 312, glycine 314, and phenylalanine 315. Catalysis depends on residues histidine 354 and glutamate 356.

The protein belongs to the CarA family. As to quaternary structure, composed of two chains; the small (or glutamine) chain promotes the hydrolysis of glutamine to ammonia, which is used by the large (or ammonia) chain to synthesize carbamoyl phosphate. Tetramer of heterodimers (alpha,beta)4.

The catalysed reaction is hydrogencarbonate + L-glutamine + 2 ATP + H2O = carbamoyl phosphate + L-glutamate + 2 ADP + phosphate + 2 H(+). It catalyses the reaction L-glutamine + H2O = L-glutamate + NH4(+). Its pathway is amino-acid biosynthesis; L-arginine biosynthesis; carbamoyl phosphate from bicarbonate: step 1/1. It participates in pyrimidine metabolism; UMP biosynthesis via de novo pathway; (S)-dihydroorotate from bicarbonate: step 1/3. In terms of biological role, small subunit of the glutamine-dependent carbamoyl phosphate synthetase (CPSase). CPSase catalyzes the formation of carbamoyl phosphate from the ammonia moiety of glutamine, carbonate, and phosphate donated by ATP, constituting the first step of 2 biosynthetic pathways, one leading to arginine and/or urea and the other to pyrimidine nucleotides. The small subunit (glutamine amidotransferase) binds and cleaves glutamine to supply the large subunit with the substrate ammonia. This chain is Carbamoyl phosphate synthase small chain, found in Synechocystis sp. (strain ATCC 27184 / PCC 6803 / Kazusa).